The chain runs to 1111 residues: Receptor-type guanylate cyclase gcy-14 (1111 aa).

A signal peptide spans 1–14; it reads MCLFLLLFPYLASG. Residues 15 to 473 lie on the Extracellular side of the membrane; sequence QFLQTVKVGL…ECPPDFVKEY (459 aa). Residues asparagine 65, asparagine 130, asparagine 318, asparagine 340, asparagine 365, and asparagine 379 are each glycosylated (N-linked (GlcNAc...) asparagine). The chain crosses the membrane as a helical span at residues 474–494; the sequence is LVYTIIAAVIVVLALLAGCAG. A Protein kinase domain is found at 482–817; it reads VIVVLALLAG…KSNLMDHVFN (336 aa). ATP is bound by residues 488–496 and lysine 545; that span reads LLAGCAGLL. The Cytoplasmic portion of the chain corresponds to 495 to 1111; that stretch reads LLYTMQMKRK…DFNNGNECVS (617 aa). A Guanylate cyclase domain is found at 875–1005; that stretch reads TIFFSDVVQF…DAVNTASRME (131 aa). A disordered region spans residues 1061-1082; that stretch reads SAQAPREKTPEPPRRQSVRSIS. Residues 1065 to 1074 show a composition bias toward basic and acidic residues; it reads PREKTPEPPR.

This sequence belongs to the adenylyl cyclase class-4/guanylyl cyclase family. As to quaternary structure, homodimer. In terms of tissue distribution, expressed asymmetrically in ASEL sensory neuron.

The protein localises to the cell membrane. It is found in the cell projection. The protein resides in the cilium. The enzyme catalyses GTP = 3',5'-cyclic GMP + diphosphate. In terms of biological role, guanylate cyclase involved in the production of the second messenger cGMP. Regulates chemotaxis responses toward Na(1+) and Li(1+) salt ions and alkaline pH in ASE left (ASEL) sensory neuron. Directly senses environmental alkalinity in ASEL neuron which probably leads to the activation of cGMP-gated cation channel tax2/tax4. The polypeptide is Receptor-type guanylate cyclase gcy-14 (Caenorhabditis elegans).